We begin with the raw amino-acid sequence, 337 residues long: Glycerol-3-phosphate dehydrogenase [NAD(P)+] (337 aa).

NADPH is bound by residues W12 and K107. Residues K107, G138, and T140 each contribute to the sn-glycerol 3-phosphate site. A142 serves as a coordination point for NADPH. Sn-glycerol 3-phosphate-binding residues include K193, D246, S256, R257, and N258. The Proton acceptor role is filled by K193. NADPH is bound at residue R257. Positions 282 and 284 each coordinate NADPH.

The protein belongs to the NAD-dependent glycerol-3-phosphate dehydrogenase family.

The protein resides in the cytoplasm. It catalyses the reaction sn-glycerol 3-phosphate + NAD(+) = dihydroxyacetone phosphate + NADH + H(+). The enzyme catalyses sn-glycerol 3-phosphate + NADP(+) = dihydroxyacetone phosphate + NADPH + H(+). The protein operates within membrane lipid metabolism; glycerophospholipid metabolism. Catalyzes the reduction of the glycolytic intermediate dihydroxyacetone phosphate (DHAP) to sn-glycerol 3-phosphate (G3P), the key precursor for phospholipid synthesis. In Koribacter versatilis (strain Ellin345), this protein is Glycerol-3-phosphate dehydrogenase [NAD(P)+].